We begin with the raw amino-acid sequence, 61 residues long: Small ribosomal subunit protein uS14B (61 aa).

Zn(2+) contacts are provided by cysteine 24, cysteine 27, cysteine 40, and cysteine 43.

This sequence belongs to the universal ribosomal protein uS14 family. Zinc-binding uS14 subfamily. Part of the 30S ribosomal subunit. Contacts proteins S3 and S10. Requires Zn(2+) as cofactor.

Binds 16S rRNA, required for the assembly of 30S particles and may also be responsible for determining the conformation of the 16S rRNA at the A site. This is Small ribosomal subunit protein uS14B from Staphylococcus saprophyticus subsp. saprophyticus (strain ATCC 15305 / DSM 20229 / NCIMB 8711 / NCTC 7292 / S-41).